A 152-amino-acid chain; its full sequence is Putative aryl-alcohol dehydrogenase YFL057C (152 aa).

This sequence belongs to the aldo/keto reductase family. Aldo/keto reductase 2 subfamily.

Its function is as follows. Putative aryl-alcohol dehydrogenase. This chain is Putative aryl-alcohol dehydrogenase YFL057C, found in Saccharomyces cerevisiae (strain ATCC 204508 / S288c) (Baker's yeast).